Reading from the N-terminus, the 284-residue chain is Bifunctional protein FolD (284 aa).

NADP(+) is bound by residues 166 to 168 (GAS) and Ile232.

The protein belongs to the tetrahydrofolate dehydrogenase/cyclohydrolase family. In terms of assembly, homodimer.

The enzyme catalyses (6R)-5,10-methylene-5,6,7,8-tetrahydrofolate + NADP(+) = (6R)-5,10-methenyltetrahydrofolate + NADPH. It carries out the reaction (6R)-5,10-methenyltetrahydrofolate + H2O = (6R)-10-formyltetrahydrofolate + H(+). It functions in the pathway one-carbon metabolism; tetrahydrofolate interconversion. Catalyzes the oxidation of 5,10-methylenetetrahydrofolate to 5,10-methenyltetrahydrofolate and then the hydrolysis of 5,10-methenyltetrahydrofolate to 10-formyltetrahydrofolate. The chain is Bifunctional protein FolD from Shewanella frigidimarina (strain NCIMB 400).